Consider the following 569-residue polypeptide: Urease subunit alpha (569 aa).

Residues 131-569 form the Urease domain; that stretch reads GGMDAHIHYI…LPMAQRYFLF (439 aa). Ni(2+) is bound by residues His-136, His-138, and Lys-218. Lys-218 bears the N6-carboxylysine mark. His-220 contacts substrate. Positions 247 and 273 each coordinate Ni(2+). Residue His-321 is the Proton donor of the active site. Asp-361 contacts Ni(2+).

The protein belongs to the metallo-dependent hydrolases superfamily. Urease alpha subunit family. As to quaternary structure, heterotrimer of UreA (gamma), UreB (beta) and UreC (alpha) subunits. Three heterotrimers associate to form the active enzyme. The cofactor is Ni cation. Post-translationally, carboxylation allows a single lysine to coordinate two nickel ions.

The protein localises to the cytoplasm. The enzyme catalyses urea + 2 H2O + H(+) = hydrogencarbonate + 2 NH4(+). It functions in the pathway nitrogen metabolism; urea degradation; CO(2) and NH(3) from urea (urease route): step 1/1. This is Urease subunit alpha from Agrobacterium fabrum (strain C58 / ATCC 33970) (Agrobacterium tumefaciens (strain C58)).